The following is a 764-amino-acid chain: Thyrotropin receptor (764 aa).

An N-terminal signal peptide occupies residues methionine 1–glycine 21. Over lysine 22 to glycine 413 the chain is Extracellular. Cysteine 31 and cysteine 41 form a disulfide bridge. N-linked (GlcNAc...) asparagine glycosylation is found at asparagine 77 and asparagine 99. LRR repeat units follow at residues leucine 125 to threonine 150, aspartate 151 to glycine 174, cysteine 176 to glycine 199, lysine 201 to glycine 223, phenylalanine 225 to histidine 248, and lysine 250 to histidine 271. N-linked (GlcNAc...) asparagine glycosylation is found at asparagine 177 and asparagine 198. An N-linked (GlcNAc...) asparagine glycan is attached at asparagine 302. Tyrosine 385 bears the Sulfotyrosine mark. The helical transmembrane segment at tyrosine 414–threonine 441 threads the bilayer. Residues serine 442–arginine 450 are Cytoplasmic-facing. Residues phenylalanine 451–valine 473 form a helical membrane-spanning segment. The Extracellular segment spans residues aspartate 474–cysteine 494. A disulfide bridge connects residues cysteine 494 and cysteine 569. Residues asparagine 495–leucine 517 traverse the membrane as a helical segment. Topologically, residues glutamate 518–histidine 537 are cytoplasmic. Residues alanine 538–isoleucine 560 form a helical membrane-spanning segment. The Extracellular segment spans residues serine 561–leucine 580. Residues alanine 581 to valine 602 traverse the membrane as a helical segment. Topologically, residues lysine 603–arginine 625 are cytoplasmic. The helical transmembrane segment at methionine 626–methionine 649 threads the bilayer. Topologically, residues asparagine 650–lysine 660 are extracellular. A helical transmembrane segment spans residues isoleucine 661–threonine 682. The Cytoplasmic segment spans residues lysine 683 to leucine 764. The short motif at proline 762–leucine 764 is the PDZ-binding element.

Belongs to the G-protein coupled receptor 1 family. FSH/LSH/TSH subfamily. As to quaternary structure, interacts with heterodimer GPHA2:GPHB5; this interaction stimulates cAMP production. Interacts (via the PDZ-binding motif) with SCRIB; regulates TSHR trafficking and function. In terms of processing, glycosylated. Sulfated. Sulfation on Tyr-385 plays a role in thyrotropin receptor binding and activation. Expressed in thyroide cells (at protein level).

Its subcellular location is the cell membrane. The protein resides in the basolateral cell membrane. Its function is as follows. Receptor for the thyroid-stimulating hormone (TSH) or thyrotropin. Also acts as a receptor for the heterodimeric glycoprotein hormone (GPHA2:GPHB5) or thyrostimulin. The activity of this receptor is mediated by G proteins which activate adenylate cyclase. Plays a central role in controlling thyroid cell metabolism. The sequence is that of Thyrotropin receptor (TSHR) from Sus scrofa (Pig).